Reading from the N-terminus, the 1089-residue chain is Carbamoyl phosphate synthase large chain (1089 aa).

A carboxyphosphate synthetic domain region spans residues 1–399 (MPKRTDIKSI…SIQKALCSLE (399 aa)). 12 residues coordinate ATP: arginine 127, arginine 167, glycine 173, glycine 174, glutamate 206, leucine 208, glutamate 213, glycine 239, valine 240, histidine 241, glutamine 283, and glutamate 297. Residues 131 to 326 (KECMKKIGMD…IAKVATLLAV (196 aa)) form the ATP-grasp 1 domain. Glutamine 283, glutamate 297, and asparagine 299 together coordinate Mg(2+). Mn(2+) contacts are provided by glutamine 283, glutamate 297, and asparagine 299. The segment at 400–553 (RSLSGFDRVK…NVSELTQSKN (154 aa)) is oligomerization domain. The segment at 554 to 951 (DAKDKKEKKV…SYAKSQIASF (398 aa)) is carbamoyl phosphate synthetic domain. Residues 680–871 (AEFITKLGIN…LAKVATRVMW (192 aa)) enclose the ATP-grasp 2 domain. Positions 716, 755, 757, 762, 787, 788, 789, 790, 830, and 842 each coordinate ATP. Mg(2+) contacts are provided by glutamine 830, glutamate 842, and asparagine 844. Mn(2+) is bound by residues glutamine 830, glutamate 842, and asparagine 844. One can recognise an MGS-like domain in the interval 952-1089 (NHLPEQGVVF…VKSLQEWLKS (138 aa)). The tract at residues 952–1089 (NHLPEQGVVF…VKSLQEWLKS (138 aa)) is allosteric domain.

This sequence belongs to the CarB family. In terms of assembly, composed of two chains; the small (or glutamine) chain promotes the hydrolysis of glutamine to ammonia, which is used by the large (or ammonia) chain to synthesize carbamoyl phosphate. Tetramer of heterodimers (alpha,beta)4. The cofactor is Mg(2+). Mn(2+) serves as cofactor.

It catalyses the reaction hydrogencarbonate + L-glutamine + 2 ATP + H2O = carbamoyl phosphate + L-glutamate + 2 ADP + phosphate + 2 H(+). It carries out the reaction hydrogencarbonate + NH4(+) + 2 ATP = carbamoyl phosphate + 2 ADP + phosphate + 2 H(+). It participates in amino-acid biosynthesis; L-arginine biosynthesis; carbamoyl phosphate from bicarbonate: step 1/1. Its pathway is pyrimidine metabolism; UMP biosynthesis via de novo pathway; (S)-dihydroorotate from bicarbonate: step 1/3. Large subunit of the glutamine-dependent carbamoyl phosphate synthetase (CPSase). CPSase catalyzes the formation of carbamoyl phosphate from the ammonia moiety of glutamine, carbonate, and phosphate donated by ATP, constituting the first step of 2 biosynthetic pathways, one leading to arginine and/or urea and the other to pyrimidine nucleotides. The large subunit (synthetase) binds the substrates ammonia (free or transferred from glutamine from the small subunit), hydrogencarbonate and ATP and carries out an ATP-coupled ligase reaction, activating hydrogencarbonate by forming carboxy phosphate which reacts with ammonia to form carbamoyl phosphate. The sequence is that of Carbamoyl phosphate synthase large chain from Campylobacter jejuni subsp. jejuni serotype O:2 (strain ATCC 700819 / NCTC 11168).